The following is a 455-amino-acid chain: tRNA modification GTPase MnmE (455 aa).

Residues Arg-24, Glu-81, and Lys-120 each contribute to the (6S)-5-formyl-5,6,7,8-tetrahydrofolate site. The TrmE-type G domain maps to 216 to 378 (GMTVVIAGRP…LREHLKACMG (163 aa)). Asn-226 is a K(+) binding site. GTP contacts are provided by residues 226 to 231 (NAGKSS), 245 to 251 (TDIAGTT), 270 to 273 (DTAG), 335 to 338 (NKAD), and 359 to 361 (SAR). Residue Ser-230 participates in Mg(2+) binding. K(+) contacts are provided by Thr-245, Ile-247, and Thr-250. Thr-251 is a Mg(2+) binding site. Residue Lys-455 coordinates (6S)-5-formyl-5,6,7,8-tetrahydrofolate.

Belongs to the TRAFAC class TrmE-Era-EngA-EngB-Septin-like GTPase superfamily. TrmE GTPase family. As to quaternary structure, homodimer. Heterotetramer of two MnmE and two MnmG subunits. The cofactor is K(+).

The protein localises to the cytoplasm. Exhibits a very high intrinsic GTPase hydrolysis rate. Involved in the addition of a carboxymethylaminomethyl (cmnm) group at the wobble position (U34) of certain tRNAs, forming tRNA-cmnm(5)s(2)U34. This Pseudomonas paraeruginosa (strain DSM 24068 / PA7) (Pseudomonas aeruginosa (strain PA7)) protein is tRNA modification GTPase MnmE.